The following is a 320-amino-acid chain: V-set and transmembrane domain-containing protein 4 (320 aa).

Residues 1 to 23 (MRLLALAAAALLARAPAPEVCAA) form the signal peptide. Residues 24 to 155 (LNVTVSPGPV…SSATEMRVIS (132 aa)) form the Ig-like domain. Topologically, residues 24-180 (LNVTVSPGPV…WAFFEDLYVY (157 aa)) are extracellular. 4 N-linked (GlcNAc...) asparagine glycosylation sites follow: asparagine 25, asparagine 41, asparagine 89, and asparagine 144. The cysteines at positions 46 and 127 are disulfide-linked. The chain crosses the membrane as a helical span at residues 181-201 (AVLVCCVGILSILLFMLVIVW). Topologically, residues 202 to 320 (QSVFNKRKSR…AQILFEENKL (119 aa)) are cytoplasmic.

Post-translationally, proteolytically cleaved to generate a bioactive peptide.

It localises to the secreted. Its subcellular location is the cell membrane. Functionally, peptide Lv enhances L-type voltage-gated calcium channel (L-VGCC) currents in retinal photoreceptors. In Homo sapiens (Human), this protein is V-set and transmembrane domain-containing protein 4 (VSTM4).